Consider the following 945-residue polypeptide: Xylosyltransferase 1 (945 aa).

The Cytoplasmic segment spans residues 1 to 17; the sequence is MQAAPCARRLARRSHSA. The helical; Signal-anchor for type II membrane protein transmembrane segment at 18–38 threads the bilayer; it reads LLAALTVLLLQTLVVWNFSSL. The Lumenal segment spans residues 39–945; sequence DSGAGERRGG…GAVKPDGRLR (907 aa). Residues 42 to 245 are disordered; the sequence is AGERRGGAAV…KYDQPPKCDI (204 aa). Residues 76–103 are compositionally biased toward gly residues; the sequence is RGGGGGGGGCGGGGRGPQARARGGGPGE. The segment covering 131–147 has biased composition (basic and acidic residues); that stretch reads KVRTDSNNENSVPKDFE. A compositionally biased stretch (polar residues) spans 149–158; the sequence is VDNSNFAPRT. A compositionally biased stretch (basic and acidic residues) spans 163 to 190; that stretch reads HQPELAKKPPSRQKELLKRKLEQQEKGK. Asn212 carries N-linked (GlcNAc...) asparagine glycosylation. The segment covering 235-245 has biased composition (basic and acidic residues); the sequence is TKYDQPPKCDI. Cystine bridges form between Cys243/Cys271, Cys287/Cys528, Cys547/Cys560, and Cys549/Cys558. Residues Val319, Asp347, and 376 to 378 contribute to the UDP-alpha-D-xylose site; that span reads TIW. Residue Asn407 is glycosylated (N-linked (GlcNAc...) asparagine). Residue 480–481 participates in UDP-alpha-D-xylose binding; it reads DW. UDP-alpha-D-xylose-binding positions include Ser561 and 584–585; that span reads RK. Intrachain disulfides connect Cys661–Cys913 and Cys906–Cys919. Asn763 carries N-linked (GlcNAc...) asparagine glycosylation. Positions 926–945 are disordered; it reads SFSPDPKSELGAVKPDGRLR.

Belongs to the glycosyltransferase 14 family. XylT subfamily. In terms of assembly, monomer. It depends on a divalent metal cation as a cofactor. Post-translationally, contains 7 disulfide bonds. N-glycosylated.

The protein resides in the golgi apparatus membrane. The enzyme catalyses UDP-alpha-D-xylose + L-seryl-[protein] = 3-O-(beta-D-xylosyl)-L-seryl-[protein] + UDP + H(+). It participates in glycan metabolism; chondroitin sulfate biosynthesis. It functions in the pathway glycan metabolism; heparan sulfate biosynthesis. In terms of biological role, catalyzes the first step in the biosynthesis of chondroitin sulfate and dermatan sulfate proteoglycans, such as DCN. Transfers D-xylose from UDP-D-xylose to specific serine residues of the core protein. Required for normal maturation of chondrocytes during bone development, normal onset of ossification and normal embryonic and postnatal skeleton development, especially of the long bones. This chain is Xylosyltransferase 1 (XYLT1), found in Pan troglodytes (Chimpanzee).